The chain runs to 927 residues: Protein unc-45 homolog B (927 aa).

TPR repeat units lie at residues P4–K37, A41–D74, and K76–N108. ARM repeat units lie at residues D167 to T206, R209 to D248, and D746 to V785.

The protein localises to the cytoplasm. Its subcellular location is the myofibril. It localises to the sarcomere. It is found in the z line. The protein resides in the a band. The protein localises to the perinuclear region. Its subcellular location is the cytosol. In terms of biological role, acts as a co-chaperone for HSP90 and is required for proper folding of the myosin motor domain. Plays a role in sarcomere formation during muscle cell assembly. Is necessary for normal early lens development. This chain is Protein unc-45 homolog B, found in Xenopus laevis (African clawed frog).